Reading from the N-terminus, the 154-residue chain is UPF0756 membrane protein BLi03063/BL00400 (154 aa).

4 consecutive transmembrane segments (helical) span residues 8–28 (FLIL…IIAV), 54–74 (WGVT…EIGF), 87–107 (WIAL…ITLL), and 117–137 (LVFG…GPLI).

It belongs to the UPF0756 family.

The protein resides in the cell membrane. The chain is UPF0756 membrane protein BLi03063/BL00400 from Bacillus licheniformis (strain ATCC 14580 / DSM 13 / JCM 2505 / CCUG 7422 / NBRC 12200 / NCIMB 9375 / NCTC 10341 / NRRL NRS-1264 / Gibson 46).